The primary structure comprises 342 residues: Type II restriction enzyme CviAII (342 aa).

The catalysed reaction is Endonucleolytic cleavage of DNA to give specific double-stranded fragments with terminal 5'-phosphates.. A P subtype restriction enzyme that recognizes the double-stranded sequence 5'-CATG-3' and cleaves after C-1. This Chlorella (PBCV-1) protein is Type II restriction enzyme CviAII (CVIAIIR).